The following is a 283-amino-acid chain: uncharacterized protein (283 aa).

Transmembrane regions (helical) follow at residues 8-28 (LILS…IGYV), 38-58 (GIHS…VKIA), 73-93 (FECL…YEIG), 100-120 (IIYG…ILSI), and 175-195 (AIAG…ICLT).

It belongs to the cation diffusion facilitator (CDF) transporter (TC 2.A.4) family.

The protein localises to the cell membrane. This is an uncharacterized protein from Methanocaldococcus jannaschii (strain ATCC 43067 / DSM 2661 / JAL-1 / JCM 10045 / NBRC 100440) (Methanococcus jannaschii).